A 379-amino-acid chain; its full sequence is Queuine tRNA-ribosyltransferase (379 aa).

The Proton acceptor role is filled by aspartate 94. Residues 94 to 98 (DSGGF), aspartate 148, glutamine 191, and glycine 218 contribute to the substrate site. The tract at residues 249-255 (GVGSPDA) is RNA binding. The active-site Nucleophile is aspartate 268. The interval 273–277 (TRIAR) is RNA binding; important for wobble base 34 recognition. 4 residues coordinate Zn(2+): cysteine 306, cysteine 308, cysteine 311, and histidine 337.

It belongs to the queuine tRNA-ribosyltransferase family. As to quaternary structure, homodimer. Within each dimer, one monomer is responsible for RNA recognition and catalysis, while the other monomer binds to the replacement base PreQ1. Requires Zn(2+) as cofactor.

The catalysed reaction is 7-aminomethyl-7-carbaguanine + guanosine(34) in tRNA = 7-aminomethyl-7-carbaguanosine(34) in tRNA + guanine. It participates in tRNA modification; tRNA-queuosine biosynthesis. Catalyzes the base-exchange of a guanine (G) residue with the queuine precursor 7-aminomethyl-7-deazaguanine (PreQ1) at position 34 (anticodon wobble position) in tRNAs with GU(N) anticodons (tRNA-Asp, -Asn, -His and -Tyr). Catalysis occurs through a double-displacement mechanism. The nucleophile active site attacks the C1' of nucleotide 34 to detach the guanine base from the RNA, forming a covalent enzyme-RNA intermediate. The proton acceptor active site deprotonates the incoming PreQ1, allowing a nucleophilic attack on the C1' of the ribose to form the product. After dissociation, two additional enzymatic reactions on the tRNA convert PreQ1 to queuine (Q), resulting in the hypermodified nucleoside queuosine (7-(((4,5-cis-dihydroxy-2-cyclopenten-1-yl)amino)methyl)-7-deazaguanosine). The polypeptide is Queuine tRNA-ribosyltransferase (Staphylococcus epidermidis (strain ATCC 35984 / DSM 28319 / BCRC 17069 / CCUG 31568 / BM 3577 / RP62A)).